A 255-amino-acid polypeptide reads, in one-letter code: Imidazole glycerol phosphate synthase subunit HisF (255 aa).

Catalysis depends on residues Asp12 and Asp131.

The protein belongs to the HisA/HisF family. Heterodimer of HisH and HisF.

It is found in the cytoplasm. The catalysed reaction is 5-[(5-phospho-1-deoxy-D-ribulos-1-ylimino)methylamino]-1-(5-phospho-beta-D-ribosyl)imidazole-4-carboxamide + L-glutamine = D-erythro-1-(imidazol-4-yl)glycerol 3-phosphate + 5-amino-1-(5-phospho-beta-D-ribosyl)imidazole-4-carboxamide + L-glutamate + H(+). Its pathway is amino-acid biosynthesis; L-histidine biosynthesis; L-histidine from 5-phospho-alpha-D-ribose 1-diphosphate: step 5/9. Functionally, IGPS catalyzes the conversion of PRFAR and glutamine to IGP, AICAR and glutamate. The HisF subunit catalyzes the cyclization activity that produces IGP and AICAR from PRFAR using the ammonia provided by the HisH subunit. This chain is Imidazole glycerol phosphate synthase subunit HisF, found in Vesicomyosocius okutanii subsp. Calyptogena okutanii (strain HA).